The chain runs to 674 residues: DNA mismatch repair protein MutL (674 aa).

The protein belongs to the DNA mismatch repair MutL/HexB family.

This protein is involved in the repair of mismatches in DNA. It is required for dam-dependent methyl-directed DNA mismatch repair. May act as a 'molecular matchmaker', a protein that promotes the formation of a stable complex between two or more DNA-binding proteins in an ATP-dependent manner without itself being part of a final effector complex. The protein is DNA mismatch repair protein MutL of Clostridium perfringens (strain ATCC 13124 / DSM 756 / JCM 1290 / NCIMB 6125 / NCTC 8237 / Type A).